Here is a 252-residue protein sequence, read N- to C-terminus: Chaplin-A (252 aa).

The first 20 residues, 1 to 20 (MVAAAAATGILSLCGSPALA), serve as a signal peptide directing secretion. In terms of domain architecture, Chaplin 1 spans 31–71 (SPGAVSGNALQVPVDVPVNACGNTVDVIAALNPAFGNECEN). Disordered regions lie at residues 71-121 (NASD…GNNA) and 150-224 (CEND…GSEG). A compositionally biased stretch (low complexity) spans 86-108 (EDASSSSSSSTSASSSGSHADGA). The Chaplin 2 domain occupies 112-152 (SPGVGSGNNAQVPVDVPVNLCGNTVDVIAALNPVFGNKCEN). Residues 153 to 165 (DAEEPPGYGEEEP) are compositionally biased toward acidic residues. Residues 210–224 (QTEQPPALAETGSEG) are compositionally biased toward low complexity. The LPXTG sorting signal signature appears at 217–221 (LAETG). 2 propeptides (removed by sortase) span residues 219–252 (ETGSEGTLGAAAAGAVLIAGGAILYRRGRALSGR) and 221–252 (GSEGTLGAAAAGAVLIAGGAILYRRGRALSGR). Thr-220 bears the Pentaglycyl murein peptidoglycan amidated threonine mark.

It belongs to the chaplin family. Long chaplin subfamily.

Its subcellular location is the secreted. It is found in the cell wall. Functionally, one of 8 partially redundant surface-active proteins required for efficient formation of aerial mycelium; the short chaplins assemble into a hydrophobic, amyloidal fibrillar surface layer that envelopes and protects aerial hyphae and spores, presumably anchored to the long chaplins. Chaplins have an overlapping function with the surface-active SapB peptide; chaplins are essential on minimal medium while on rich medium both chaplins and SapB are required for efficient aerial hyphae formation. A minimal chaplin strain capable of forming aerial mycelium/hyphae on minimal medium contains ChpC, ChpE and ChpH. The strain also has restored rodlet formation on the hyphae surface. A second minimal chaplin strain with ChpA, ChpD and ChpE makes slightly less robust hyphae. The long chaplins (ChpA, ChpB, ChpC) are not absolutely necessary for short chaplin localization or rodlet formation, but probably play a role in initiating aerial hyphae development. Chaplins are also involved in cell attachment to a hydrophobic surface. In Streptomyces coelicolor (strain ATCC BAA-471 / A3(2) / M145), this protein is Chaplin-A.